The following is a 258-amino-acid chain: Indole-3-glycerol phosphate synthase (258 aa).

This sequence belongs to the TrpC family.

It carries out the reaction 1-(2-carboxyphenylamino)-1-deoxy-D-ribulose 5-phosphate + H(+) = (1S,2R)-1-C-(indol-3-yl)glycerol 3-phosphate + CO2 + H2O. It functions in the pathway amino-acid biosynthesis; L-tryptophan biosynthesis; L-tryptophan from chorismate: step 4/5. The chain is Indole-3-glycerol phosphate synthase from Campylobacter fetus subsp. fetus (strain 82-40).